We begin with the raw amino-acid sequence, 274 residues long: Large ribosomal subunit protein uL2 (274 aa).

The segment at 222-274 (GVAMNPVDHPHGGGEGRGKGHHPQSPWGQLAKGYKTRRGKKASDKLIVRRRNG) is disordered. Residues 229-239 (DHPHGGGEGRG) show a composition bias toward basic and acidic residues.

The protein belongs to the universal ribosomal protein uL2 family. In terms of assembly, part of the 50S ribosomal subunit. Forms a bridge to the 30S subunit in the 70S ribosome.

Its function is as follows. One of the primary rRNA binding proteins. Required for association of the 30S and 50S subunits to form the 70S ribosome, for tRNA binding and peptide bond formation. It has been suggested to have peptidyltransferase activity; this is somewhat controversial. Makes several contacts with the 16S rRNA in the 70S ribosome. The chain is Large ribosomal subunit protein uL2 from Thermosipho africanus (strain TCF52B).